A 461-amino-acid chain; its full sequence is Cysteine--tRNA ligase (461 aa).

Residue C28 participates in Zn(2+) binding. A 'HIGH' region motif is present at residues 30-40 (ITVYDLCHIGH). C209, H234, and E238 together coordinate Zn(2+). The short motif at 266 to 270 (KMSKS) is the 'KMSKS' region element. K269 is a binding site for ATP.

Belongs to the class-I aminoacyl-tRNA synthetase family. In terms of assembly, monomer. Zn(2+) is required as a cofactor.

The protein localises to the cytoplasm. The catalysed reaction is tRNA(Cys) + L-cysteine + ATP = L-cysteinyl-tRNA(Cys) + AMP + diphosphate. The sequence is that of Cysteine--tRNA ligase from Escherichia coli O157:H7.